Reading from the N-terminus, the 273-residue chain is 2-dehydro-3-deoxyphosphooctonate aldolase (273 aa).

It belongs to the KdsA family.

It is found in the cytoplasm. It catalyses the reaction D-arabinose 5-phosphate + phosphoenolpyruvate + H2O = 3-deoxy-alpha-D-manno-2-octulosonate-8-phosphate + phosphate. It participates in carbohydrate biosynthesis; 3-deoxy-D-manno-octulosonate biosynthesis; 3-deoxy-D-manno-octulosonate from D-ribulose 5-phosphate: step 2/3. Its pathway is bacterial outer membrane biogenesis; lipopolysaccharide biosynthesis. The polypeptide is 2-dehydro-3-deoxyphosphooctonate aldolase (Cyanothece sp. (strain PCC 7425 / ATCC 29141)).